We begin with the raw amino-acid sequence, 290 residues long: Inner membrane protein YebZ (290 aa).

Over 1-10 (MLAFTWIALR) the chain is Periplasmic. The helical transmembrane segment at 11 to 31 (FIHFTSLMLVFGFAMYGAWLA) threads the bilayer. Residues 32 to 49 (PLTIRRLLAKRFLRLQQH) lie on the Cytoplasmic side of the membrane. The chain crosses the membrane as a helical span at residues 50–70 (AAVWSLISATAMLAVQGGLMG). Topologically, residues 71–89 (TGWTDVFSPNIWQAVLQTQ) are periplasmic. The helical transmembrane segment at 90–110 (FGGIWLWQIVLALVTLIVALM) threads the bilayer. At 111–117 (QPRNMPR) the chain is on the cytoplasmic side. A helical membrane pass occupies residues 118-138 (LLFMLTTAQFILLAGVGHATL). The Periplasmic portion of the chain corresponds to 139-151 (NEGVTAKIHQTNH). A helical transmembrane segment spans residues 152–172 (AIHLICAAAWFGGLLPVLWCM). Topologically, residues 173–195 (QLIKGRWRHQAIQALMRFSWCGH) are cytoplasmic. A helical transmembrane segment spans residues 196–216 (FAVIGVLASGVLNALLITGFP). Over 217–222 (PTLTTY) the chain is Periplasmic. A helical transmembrane segment spans residues 223-243 (WGQLLLLKAILVMIMVVIALA). The Cytoplasmic segment spans residues 244 to 260 (NRYVLVPRMRQDEDRAA). The chain crosses the membrane as a helical span at residues 261–281 (PWFVWMTKLEWAIGAVVLVII). The Periplasmic portion of the chain corresponds to 282–290 (SLLATLEPF).

Belongs to the CopD family.

It is found in the cell inner membrane. This Escherichia coli (strain K12) protein is Inner membrane protein YebZ (yebZ).